We begin with the raw amino-acid sequence, 451 residues long: MEDHKISMEKIVSLCKRRGFVFQSSEIYGGQNGAWDYGPLGIELKNNVSRAWWKEMTQLHDNIVGLDAAILMHPRTWEASGHVENFTDPLVDCKKCKSRFRADHLPPENLEKRVCPDCGGELTDTRKFNLMFKTHIGPTDDNSSVIYLRPETAQGIYVNYKNIIQSNRMKIPFGIAQIGKAFRNEIVTKNFIFRTCEFEQMEMQFFVKPGTDDEWFDYWKKQRWAFYEKYGVRTNKLQWHQHGKDELAHYAKDAYDIEYEFPMGFKELEGVHNRTNYDLTRHTEYSGKDMQYIDQDNGNEKYIPYIIETSAGLTRNVLMFICDAYDEEKVADKGNDDDWRTVLRFHPNIAPITVAVLPLMKKDGLAELAEEIRNELKEEFKTDYDQSGAIGKRYRRQDEVGTPFCVTVDYDSKEDNTVTLRFRDSMEQVRIPRTELISRIKTEIKNYKRAH.

Residues R101 and E151 each contribute to the substrate site. ATP-binding positions include 183–185 (RNE), 193–198 (FRTCEF), 267–268 (EL), and 312–315 (GLTR). Residue 198-202 (FEQME) coordinates substrate. 308-312 (ETSAG) provides a ligand contact to substrate.

This sequence belongs to the class-II aminoacyl-tRNA synthetase family. In terms of assembly, homodimer.

Its subcellular location is the cytoplasm. It carries out the reaction tRNA(Gly) + glycine + ATP = glycyl-tRNA(Gly) + AMP + diphosphate. In terms of biological role, catalyzes the attachment of glycine to tRNA(Gly). This Treponema denticola (strain ATCC 35405 / DSM 14222 / CIP 103919 / JCM 8153 / KCTC 15104) protein is Glycine--tRNA ligase.